The primary structure comprises 258 residues: Small ribosomal subunit protein uS2 (258 aa).

The disordered stretch occupies residues 222–258 (GKALRDQDEAEQVEPVSQEEKDEVVAEAMSEADFEEQ).

This sequence belongs to the universal ribosomal protein uS2 family.

In Campylobacter fetus subsp. fetus (strain 82-40), this protein is Small ribosomal subunit protein uS2.